Reading from the N-terminus, the 241-residue chain is MSQADLNKHKNADPSELNNFNQLANTWWDESGEFGALHKINPLRIEFIKQFQSIENKTILDVGCGGGILSESLAKAGGNVTGIDLAEDVLTIARLHSLDTETKVNYHLISAEDHAQTHEEEYDIVTCMEMLEHVPDPASIIHAAAKAVKPGGWVFFSTLNRNYKSYLLAIFAAEQVLNLVPKGTHTHDKFIQPSELDAMARQAGLFLKEGAGIDFNPLLKRYRLTDRLDVNYLLAYQKSAV.

Residues Arg44, Gly63, Asp84, and Met128 each coordinate S-adenosyl-L-methionine.

It belongs to the methyltransferase superfamily. UbiG/COQ3 family.

It carries out the reaction a 3-demethylubiquinol + S-adenosyl-L-methionine = a ubiquinol + S-adenosyl-L-homocysteine + H(+). The catalysed reaction is a 3-(all-trans-polyprenyl)benzene-1,2-diol + S-adenosyl-L-methionine = a 2-methoxy-6-(all-trans-polyprenyl)phenol + S-adenosyl-L-homocysteine + H(+). It participates in cofactor biosynthesis; ubiquinone biosynthesis. Functionally, O-methyltransferase that catalyzes the 2 O-methylation steps in the ubiquinone biosynthetic pathway. This chain is Ubiquinone biosynthesis O-methyltransferase, found in Hydrogenovibrio crunogenus (strain DSM 25203 / XCL-2) (Thiomicrospira crunogena).